Reading from the N-terminus, the 364-residue chain is Pre-mRNA-splicing factor SLT11 (364 aa).

Positions 331–364 (KSTDNAKNDKKKTSKKVHKDRSKKSKPRANKLTI) are disordered. The segment covering 339 to 364 (DKKKTSKKVHKDRSKKSKPRANKLTI) has biased composition (basic residues).

It belongs to the SLT11 family. As to quaternary structure, belongs to the CWC complex (or CEF1-associated complex), a spliceosome subcomplex composed of the U2, U5 and U6 snRNAs and at least BUD13, BUD31, BRR2, CDC40, CEF1, CLF1, CUS1, CWC2, CWC15, CWC21, CWC22, CWC23, CWC24, CWC25, CWC27, ECM2, HSH155, IST3, ISY1, LEA1, MSL1, NTC20, PRP8, PRP9, PRP11, PRP19, PRP21, PRP22, PRP45, PRP46, SLU7, SMB1, SMD1, SMD2, SMD3, SMX2, SMX3, SNT309, SNU114, SPP2, SYF1, SYF2, RSE1 and YJU2. Interacts with SLU7.

It localises to the nucleus. Functionally, involved in pre-mRNA splicing. Facilitates the cooperative formation of U2/U6 helix II in association with stem II in the spliceosome. Binds to RNA. The chain is Pre-mRNA-splicing factor SLT11 (ECM2) from Saccharomyces cerevisiae (strain ATCC 204508 / S288c) (Baker's yeast).